The chain runs to 156 residues: 6,7-dimethyl-8-ribityllumazine synthase (156 aa).

5-amino-6-(D-ribitylamino)uracil-binding positions include phenylalanine 24, 58-60, and 82-84; these read AFE and VII. 87 to 88 lines the (2S)-2-hydroxy-3-oxobutyl phosphate pocket; the sequence is ST. Histidine 90 acts as the Proton donor in catalysis. 5-amino-6-(D-ribitylamino)uracil is bound at residue phenylalanine 115. Arginine 129 provides a ligand contact to (2S)-2-hydroxy-3-oxobutyl phosphate.

This sequence belongs to the DMRL synthase family.

The enzyme catalyses (2S)-2-hydroxy-3-oxobutyl phosphate + 5-amino-6-(D-ribitylamino)uracil = 6,7-dimethyl-8-(1-D-ribityl)lumazine + phosphate + 2 H2O + H(+). It participates in cofactor biosynthesis; riboflavin biosynthesis; riboflavin from 2-hydroxy-3-oxobutyl phosphate and 5-amino-6-(D-ribitylamino)uracil: step 1/2. Catalyzes the formation of 6,7-dimethyl-8-ribityllumazine by condensation of 5-amino-6-(D-ribitylamino)uracil with 3,4-dihydroxy-2-butanone 4-phosphate. This is the penultimate step in the biosynthesis of riboflavin. This chain is 6,7-dimethyl-8-ribityllumazine synthase, found in Chlorobaculum parvum (strain DSM 263 / NCIMB 8327) (Chlorobium vibrioforme subsp. thiosulfatophilum).